The chain runs to 172 residues: MSVASPIQCIRILNPSSSSSSSTASSSFRFSTTTKPCVFIIRCSQTEGPLRRPSAPPTLREPQKPVPPSQPSSSPPPSPPPQKAVAVDGKSVTTVEFQRQKAKELQEYFKQKKLEAAGQGPFFGFQPKNEISNGRWAMFGFAVGMLTEYATGSDLVDQVKILLSNFGILDLE.

The N-terminal 43 residues, 1–43 (MSVASPIQCIRILNPSSSSSSSTASSSFRFSTTTKPCVFIIRC), are a transit peptide targeting the chloroplast. Residues 44–135 (SQTEGPLRRP…QPKNEISNGR (92 aa)) are Stromal-facing. Residues 45 to 90 (QTEGPLRRPSAPPTLREPQKPVPPSQPSSSPPPSPPPQKAVAVDGK) form a disordered region. A compositionally biased stretch (pro residues) spans 64-82 (KPVPPSQPSSSPPPSPPPQ). Residues 136 to 156 (WAMFGFAVGMLTEYATGSDLV) traverse the membrane as a helical segment. The Lumenal segment spans residues 157–172 (DQVKILLSNFGILDLE).

This sequence belongs to the ELIP/psbS family. In terms of assembly, component of a high molecular weight complex containing OHP1, OHP2 and HCF244, and PSII core proteins D1/D2, HCF136 and HCF173. Forms a trimeric complex with OHP1 and HCF244 that mutually stabilizes each subunit.

The protein localises to the plastid. The protein resides in the chloroplast thylakoid membrane. Its function is as follows. May play a photoprotective role within PSI in response to light stress. Forms a trimeric complex with OHP1 and HCF244 that is required to promote PSII core subunit assembly. The trimeric complex forms a transient PSII reaction center-like complex with PsbA, PsbD, PsbE, PsbF and PsbI subunits in thylakoids for early assembly of PSII as well as PSII repair. The trimeric complex is required for the recruitment of ribosomes to the psbA mRNA during PSII biogenesis and repair. Forms a heterodimer with OHP1 that binds chlorophylls and carotenoids, and that may function in the delivery of pigments to the PsbA subunit of PSII. The chain is Light-harvesting complex-like protein OHP2, chloroplastic from Arabidopsis thaliana (Mouse-ear cress).